Consider the following 380-residue polypeptide: Calreticulin-3 (380 aa).

The N-terminal stretch at 1–19 (MVSARALLWAICVLRVALA) is a signal peptide. Positions 20-197 (TVYFQEEFLD…GQSIESGSIE (178 aa)) are N-domain. N-linked (GlcNAc...) asparagine glycosylation is present at N42. An alpha-D-glucoside is bound by residues Y109, K111, Y128, and D135. Cysteines 137 and 163 form a disulfide. A run of 7 repeats spans residues 191–202 (IESGSIEYDWNL), 209–220 (EKTSLDSRDWDQ), 222–231 (EGSKVQDWEK), 235–246 (DAGASKPSDWNS), 250–256 (GDWLQKP), 260–268 (DGLKAEGID), and 270–280 (DVWLHQKMRPA). The segment at 191–246 (IESGSIEYDWNLTSLRKTEKTSLDSRDWDQVEGSKVQDWEKHFLDAGASKPSDWNS) is 4 X approximate repeats. The P-domain stretch occupies residues 198–291 (YDWNLTSLRK…YLTQYDLSEF (94 aa)). N-linked (GlcNAc...) asparagine glycosylation occurs at N201. Residues 250–280 (GDWLQKPPYEDGLKAEGIDKDVWLHQKMRPA) form a 3 X approximate repeats region. The C-domain stretch occupies residues 292–380 (ENIGAIGLEL…FSRFHRQGEL (89 aa)). Residue E300 participates in an alpha-D-glucoside binding. Positions 377–380 (QGEL) match the Prevents secretion from ER motif.

It belongs to the calreticulin family. In terms of assembly, component of an EIF2 complex at least composed of CELF1/CUGBP1, CALR, CALR3, EIF2S1, EIF2S2, HSP90B1 and HSPA5. In terms of tissue distribution, testis specific, absent in mature sperm.

It localises to the endoplasmic reticulum lumen. Functionally, CALR3 capacity for calcium-binding may be absent or much lower than that of CALR. During spermatogenesis, may act as a lectin-independent chaperone for specific client proteins such as ADAM3. Required for sperm fertility. This chain is Calreticulin-3 (Calr3), found in Mus musculus (Mouse).